We begin with the raw amino-acid sequence, 157 residues long: Phosphopantetheine adenylyltransferase (157 aa).

Thr10 provides a ligand contact to substrate. ATP-binding positions include 10-11 (TF) and His18. Substrate is bound by residues Lys42, Leu74, and Arg88. ATP is bound by residues 89–91 (GLR), Glu99, and 124–130 (NAFISSS).

The protein belongs to the bacterial CoaD family. As to quaternary structure, homohexamer. Mg(2+) serves as cofactor.

It is found in the cytoplasm. The enzyme catalyses (R)-4'-phosphopantetheine + ATP + H(+) = 3'-dephospho-CoA + diphosphate. The protein operates within cofactor biosynthesis; coenzyme A biosynthesis; CoA from (R)-pantothenate: step 4/5. Its function is as follows. Reversibly transfers an adenylyl group from ATP to 4'-phosphopantetheine, yielding dephospho-CoA (dPCoA) and pyrophosphate. This chain is Phosphopantetheine adenylyltransferase, found in Helicobacter pylori (strain J99 / ATCC 700824) (Campylobacter pylori J99).